A 262-amino-acid polypeptide reads, in one-letter code: Small ribosomal subunit protein eS4 (262 aa).

The S4 RNA-binding domain maps to 42–105; the sequence is LPLIIMLRNR…GEFFRLLYDV (64 aa).

This sequence belongs to the eukaryotic ribosomal protein eS4 family.

The polypeptide is Small ribosomal subunit protein eS4 (RpS4) (Ixodes scapularis (Black-legged tick)).